Here is a 263-residue protein sequence, read N- to C-terminus: Palmitoyltransferase ZDHHC22 (263 aa).

The Cytoplasmic portion of the chain corresponds to 1 to 9 (MLALRLLNV). A helical transmembrane segment spans residues 10-30 (VAPAYFLCISLVTFVLQLFLF). The Lumenal portion of the chain corresponds to 31–48 (LPSMREDPTATPLFSPAV). The chain crosses the membrane as a helical span at residues 49 to 69 (LHGALFLFLSANALGNYVLVI). Topologically, residues 70–125 (QNSPDDLGTCQGTMSQRPQCPPPSTHFCRVCSRVTLRHDHHCFFTGNCIGSRNMRN) are cytoplasmic. Residues 91-131 (PPSTHFCRVCSRVTLRHDHHCFFTGNCIGSRNMRNFILFCL) form the DHHC domain. Residue Cys-111 is the S-palmitoyl cysteine intermediate of the active site. The next 2 helical transmembrane spans lie at 126-146 (FILFCLYTSLACLYSMVAGVA) and 147-167 (YISAVLSISFAHPLAFLTLLP). The Cytoplasmic segment spans residues 168–182 (TSISQFFSGAVLGSD). Residues 183-203 (MFVILMLYLWFAVGLACAGFC) form a helical membrane-spanning segment. The Lumenal portion of the chain corresponds to 204–263 (CHQLLLILRGQTRYQVRKGMAVRARPWRKNLQEVFGKRWLLGLLVPMFNVGTESSKQQDK).

The protein belongs to the DHHC palmitoyltransferase family. Interacts with CNN3.

The protein resides in the endoplasmic reticulum membrane. Its subcellular location is the golgi apparatus membrane. It catalyses the reaction L-cysteinyl-[protein] + hexadecanoyl-CoA = S-hexadecanoyl-L-cysteinyl-[protein] + CoA. Its function is as follows. Palmitoyltransferase that could catalyze the addition of palmitate onto various protein substrates and be involved in a variety of cellular processes. Catalyzes the palmitoylation of KCNMA1, regulating localization of KCNMA1 to the plasma membrane. Might also mediate palmitoylation of CNN3. The chain is Palmitoyltransferase ZDHHC22 from Mus musculus (Mouse).